The chain runs to 381 residues: MAIFIRKTHPLLKIMNHALVDLPAPSNISLWWNFGSLLGLCLIIQILTGLFLAMHYTADVSMAFSSVVHICRDVNYGWLIRNIHANGASLFFICVYLHIARGLYYGSYLYKETWNIGVILLFLLMATAFVGYVLPWGQMSFWGATVITNLLSAFPYIGNTLVQWIWGGFSVDNATLTRFFAFHFLLPFLILALTIIHLLFLHETGSNNPLGINSDADKISFHPYFSYKDLLGFFVMIFFLTTLALFMPNLLGDAENFIPANPLVTPPHIKPEWYFLFAYAILRSIPNKLGGVLALLFSIFILMLVPLLHTSKQRSNIFRPLTQIFFWLLVANSIILTWIGGQPVEQPFITVGQVASISYFSLFLIIMPFASWCENKILSLN.

4 helical membrane passes run Phe34–Met54, Trp78–Ile99, Trp114–Leu134, and Phe179–Leu199. The heme b site is built by His84 and His98. The heme b site is built by His183 and His197. His202 contributes to the a ubiquinone binding site. 4 helical membrane passes run Tyr227 to Met247, Leu289 to His309, Leu321 to Gly341, and Phe348 to Pro368.

Belongs to the cytochrome b family. In terms of assembly, the cytochrome bc1 complex contains 3 respiratory subunits (MT-CYB, CYC1 and UQCRFS1), 2 core proteins (UQCRC1 and UQCRC2) and probably 6 low-molecular weight proteins. Heme b serves as cofactor.

The protein localises to the mitochondrion inner membrane. Component of the ubiquinol-cytochrome c reductase complex (complex III or cytochrome b-c1 complex) that is part of the mitochondrial respiratory chain. The b-c1 complex mediates electron transfer from ubiquinol to cytochrome c. Contributes to the generation of a proton gradient across the mitochondrial membrane that is then used for ATP synthesis. This Sphyrna tiburo vespertina (Pacific bonnethead shark) protein is Cytochrome b (mt-cyb).